Here is a 416-residue protein sequence, read N- to C-terminus: Neamine transaminase NeoN (416 aa).

At K231 the chain carries N6-(pyridoxal phosphate)lysine.

The protein belongs to the class-III pyridoxal-phosphate-dependent aminotransferase family. Requires pyridoxal 5'-phosphate as cofactor.

The enzyme catalyses neomycin C + 2-oxoglutarate = 6'''-deamino-6'''-oxoneomycin C + L-glutamate. It carries out the reaction neamine + 2-oxoglutarate = 6'-oxoparomamine + L-glutamate. It participates in antibiotic biosynthesis; neomycin biosynthesis. Its function is as follows. 6'-oxoglucosaminyl:L-glutamate aminotransferase that catalyzes pyridoxal-5'-phosphate-mediated transamination for the conversion of paromamine to neamine in the biosynthetic pathway of neomycin. Also able to catalyze deamination at C-6''' of neomycin. The chain is Neamine transaminase NeoN (neoN) from Streptomyces fradiae (Streptomyces roseoflavus).